Consider the following 204-residue polypeptide: ADP-ribosylation factor-like protein 15 (204 aa).

Residues 39–46 (GLTGSGKT), 82–86 (ELGGA), and 142–145 (NHQD) contribute to the GTP site.

Belongs to the small GTPase superfamily. Arf family.

This Pongo abelii (Sumatran orangutan) protein is ADP-ribosylation factor-like protein 15 (ARL15).